Consider the following 103-residue polypeptide: Conantokin R1-A (103 aa).

An N-terminal signal peptide occupies residues 1 to 21 (MQLYTYLYLLVPLVTFHLILG). A propeptide spanning residues 22–79 (TGTLDHGGALTERRSTDATALKPEPVLQKSAARSTDDNGKDRLTQMKRILKKRGNNPR) is cleaved from the precursor. Residues 34–83 (RRSTDATALKPEPVLQKSAARSTDDNGKDRLTQMKRILKKRGNNPRADEE) form a disordered region. Positions 55–65 (STDDNGKDRLT) are enriched in basic and acidic residues. Glu82, Glu83, and Glu89 each carry 4-carboxyglutamate.

This sequence belongs to the conotoxin B superfamily. Requires Ca(2+) as cofactor. Mg(2+) serves as cofactor. As to expression, expressed by the venom duct.

Its subcellular location is the secreted. Its function is as follows. Conantokins inhibit N-methyl-D-aspartate (NMDA) receptors. This toxin has the highest potency for the NR2B/GRIN2B subunit (IC(50)=0.11 uM), followed by NR2D/GRIN2D (IC(50)=0.48 uM), NR2A/GRIN2A (IC(50)=2.1 uM), and NR2C/GRIN2C (IC(50)=6.1 uM) subunits when tested on rat receptors. The chain is Conantokin R1-A from Conus rolani (Cone snail).